The primary structure comprises 248 residues: 3-deoxy-manno-octulosonate cytidylyltransferase (248 aa).

It belongs to the KdsB family.

It is found in the cytoplasm. The enzyme catalyses 3-deoxy-alpha-D-manno-oct-2-ulosonate + CTP = CMP-3-deoxy-beta-D-manno-octulosonate + diphosphate. It functions in the pathway nucleotide-sugar biosynthesis; CMP-3-deoxy-D-manno-octulosonate biosynthesis; CMP-3-deoxy-D-manno-octulosonate from 3-deoxy-D-manno-octulosonate and CTP: step 1/1. The protein operates within bacterial outer membrane biogenesis; lipopolysaccharide biosynthesis. In terms of biological role, activates KDO (a required 8-carbon sugar) for incorporation into bacterial lipopolysaccharide in Gram-negative bacteria. The chain is 3-deoxy-manno-octulosonate cytidylyltransferase from Shigella flexneri.